Reading from the N-terminus, the 377-residue chain is D-alanine--D-alanine ligase (377 aa).

Residues lysine 140 to aspartate 349 enclose the ATP-grasp domain. Position 170-225 (valine 170–leucine 225) interacts with ATP. Residues aspartate 303, glutamate 316, and asparagine 318 each contribute to the Mg(2+) site.

Belongs to the D-alanine--D-alanine ligase family. It depends on Mg(2+) as a cofactor. The cofactor is Mn(2+).

It localises to the cytoplasm. The enzyme catalyses 2 D-alanine + ATP = D-alanyl-D-alanine + ADP + phosphate + H(+). The protein operates within cell wall biogenesis; peptidoglycan biosynthesis. Its function is as follows. Cell wall formation. This is D-alanine--D-alanine ligase from Leuconostoc mesenteroides.